Reading from the N-terminus, the 672-residue chain is Tubulin--tyrosine ligase-like protein 12 (672 aa).

The TTL domain occupies 332-670 (KIKIFLQIFA…LDEIDPTKVT (339 aa)). Residues 480–483 (CEYI), lysine 499, and aspartate 501 each bind ATP.

Belongs to the tubulin--tyrosine ligase family.

Functionally, regulates microtubule dynamics in uterine muscle cells. This is Tubulin--tyrosine ligase-like protein 12 from Caenorhabditis briggsae.